Reading from the N-terminus, the 172-residue chain is Transcriptional repressor NrdR (172 aa).

Residues 3 to 34 fold into a zinc finger; the sequence is CPFCGEADTKVIDSRLVAEGDQVRRRRECLSC. Residues 49–139 enclose the ATP-cone domain; sequence PRVVKQDGTR…VYRSFQDINE (91 aa).

This sequence belongs to the NrdR family. The cofactor is Zn(2+).

Functionally, negatively regulates transcription of bacterial ribonucleotide reductase nrd genes and operons by binding to NrdR-boxes. This is Transcriptional repressor NrdR from Marinobacter nauticus (strain ATCC 700491 / DSM 11845 / VT8) (Marinobacter aquaeolei).